Here is a 127-residue protein sequence, read N- to C-terminus: Gamma-synuclein (127 aa).

2 consecutive repeat copies span residues Glu20–Ala30 and Glu31–Gly41. The tract at residues Glu20 to Ser67 is 4 X 11 AA tandem repeats of [EGSA]-K-T-K-[EQ]-[GQ]-V-X(4). Residues Ala42–Ala56 form a 3; approximate repeat. Residues Glu57–Ser67 form repeat 4. Ser67 and Ser72 each carry phosphoserine. Residues Arg96–Asp127 are disordered. Phosphoserine; by BARK1, CaMK2 and CK2 is present on Ser124.

It belongs to the synuclein family. As to quaternary structure, may be a centrosome-associated protein. Interacts with MYOC; affects its secretion and its aggregation. Phosphorylated. Phosphorylation by GRK5 appears to occur on residues distinct from the residue phosphorylated by other kinases. In terms of tissue distribution, highly expressed in brain, particularly in the substantia nigra. Also expressed in the corpus callosum, heart, skeletal muscle, ovary, testis, colon and spleen. Weak expression in pancreas, kidney and lung.

It localises to the cytoplasm. Its subcellular location is the perinuclear region. It is found in the cytoskeleton. The protein resides in the microtubule organizing center. The protein localises to the centrosome. It localises to the spindle. Its function is as follows. Plays a role in neurofilament network integrity. May be involved in modulating axonal architecture during development and in the adult. In vitro, increases the susceptibility of neurofilament-H to calcium-dependent proteases. May also function in modulating the keratin network in skin. Activates the MAPK and Elk-1 signal transduction pathway. In Homo sapiens (Human), this protein is Gamma-synuclein (SNCG).